Reading from the N-terminus, the 486-residue chain is ATP synthase subunit beta (486 aa).

Position 164–171 (164–171 (GGAGVGKT)) interacts with ATP.

It belongs to the ATPase alpha/beta chains family. In terms of assembly, F-type ATPases have 2 components, CF(1) - the catalytic core - and CF(0) - the membrane proton channel. CF(1) has five subunits: alpha(3), beta(3), gamma(1), delta(1), epsilon(1). CF(0) has four main subunits: a(1), b(1), b'(1) and c(9-12).

It localises to the cellular thylakoid membrane. The enzyme catalyses ATP + H2O + 4 H(+)(in) = ADP + phosphate + 5 H(+)(out). In terms of biological role, produces ATP from ADP in the presence of a proton gradient across the membrane. The catalytic sites are hosted primarily by the beta subunits. The sequence is that of ATP synthase subunit beta from Prochlorococcus marinus (strain MIT 9515).